The following is a 29-amino-acid chain: Cyclotide vibi-D (29 aa).

Residues Gly1–Asn29 constitute a cross-link (cyclopeptide (Gly-Asn)). 3 disulfide bridges follow: Cys5/Cys19, Cys9/Cys21, and Cys14/Cys26.

This is a cyclic peptide.

Probably participates in a plant defense mechanism. Has moderate levels of cytotoxic activity, active against a human lymphoma cell line with an IC(50) of &gt;30 uM. This is Cyclotide vibi-D from Viola biflora (Yellow wood violet).